A 610-amino-acid polypeptide reads, in one-letter code: Pentatricopeptide repeat-containing protein At3g15590, mitochondrial (610 aa).

A mitochondrion-targeting transit peptide spans 1–71; that stretch reads MYSLSRILQR…FSRFFGIHKL (71 aa). The segment at 88-142 is disordered; it reads EELSESEEAVPVSGDVPEGVVDDDSLFEPELGSDNDDLEIEEKHSKDGGKPTKKR. Residues 107-127 show a composition bias toward acidic residues; sequence VVDDDSLFEPELGSDNDDLEI. A compositionally biased stretch (basic and acidic residues) spans 128 to 137; sequence EEKHSKDGGK. PPR repeat units follow at residues 241–275, 276–309, 310–344, 345–379, 380–410, 412–442, 447–481, 482–517, and 518–552; these read GEVV…KFPT, SVFA…NIKP, SRAT…GIEL, DPEL…GLQQ, TPWV…VDQN, RYDN…LVEK, PMMP…GIAI, GPST…KMRP, and MFTT…SYAA.

The protein belongs to the PPR family. P subfamily.

It is found in the mitochondrion. In Arabidopsis thaliana (Mouse-ear cress), this protein is Pentatricopeptide repeat-containing protein At3g15590, mitochondrial.